The primary structure comprises 296 residues: HTH-type transcriptional regulator GltR (296 aa).

Residues 1–58 (MNIQLLQVFLTTAREGSISKAALTLNYAQSNVTNKIQQLENDLQTKLFYRHSRGITLT) enclose the HTH lysR-type domain. The segment at residues 18–37 (ISKAALTLNYAQSNVTNKIQ) is a DNA-binding region (H-T-H motif).

This sequence belongs to the LysR transcriptional regulatory family.

Functionally, positive regulator of glutamate biosynthesis (gltAB genes). Negatively regulates its own expression. The polypeptide is HTH-type transcriptional regulator GltR (gltR) (Bacillus subtilis (strain 168)).